A 729-amino-acid polypeptide reads, in one-letter code: Phosphoribosylformylglycinamidine synthase subunit PurL (729 aa).

The active site involves histidine 42. 2 residues coordinate ATP: tyrosine 45 and lysine 84. Glutamate 86 is a Mg(2+) binding site. Substrate is bound by residues 87–90 (SHNH) and arginine 109. Histidine 88 serves as the catalytic Proton acceptor. Aspartate 110 contributes to the Mg(2+) binding site. A substrate-binding site is contributed by glutamine 238. Aspartate 266 provides a ligand contact to Mg(2+). 310 to 312 (ESQ) contributes to the substrate binding site. ATP contacts are provided by aspartate 492 and glycine 529. Asparagine 530 serves as a coordination point for Mg(2+). Residue serine 532 coordinates substrate.

This sequence belongs to the FGAMS family. In terms of assembly, monomer. Part of the FGAM synthase complex composed of 1 PurL, 1 PurQ and 2 PurS subunits.

Its subcellular location is the cytoplasm. The enzyme catalyses N(2)-formyl-N(1)-(5-phospho-beta-D-ribosyl)glycinamide + L-glutamine + ATP + H2O = 2-formamido-N(1)-(5-O-phospho-beta-D-ribosyl)acetamidine + L-glutamate + ADP + phosphate + H(+). Its pathway is purine metabolism; IMP biosynthesis via de novo pathway; 5-amino-1-(5-phospho-D-ribosyl)imidazole from N(2)-formyl-N(1)-(5-phospho-D-ribosyl)glycinamide: step 1/2. Part of the phosphoribosylformylglycinamidine synthase complex involved in the purines biosynthetic pathway. Catalyzes the ATP-dependent conversion of formylglycinamide ribonucleotide (FGAR) and glutamine to yield formylglycinamidine ribonucleotide (FGAM) and glutamate. The FGAM synthase complex is composed of three subunits. PurQ produces an ammonia molecule by converting glutamine to glutamate. PurL transfers the ammonia molecule to FGAR to form FGAM in an ATP-dependent manner. PurS interacts with PurQ and PurL and is thought to assist in the transfer of the ammonia molecule from PurQ to PurL. This chain is Phosphoribosylformylglycinamidine synthase subunit PurL, found in Campylobacter concisus (strain 13826).